The sequence spans 93 residues: RNA-binding protein Hfq (93 aa).

In terms of domain architecture, Sm spans 11–71; the sequence is DVFLNHVRKS…ISTVMPGAPI (61 aa).

Belongs to the Hfq family. In terms of assembly, homohexamer.

Functionally, RNA chaperone that binds small regulatory RNA (sRNAs) and mRNAs to facilitate mRNA translational regulation in response to envelope stress, environmental stress and changes in metabolite concentrations. Also binds with high specificity to tRNAs. The sequence is that of RNA-binding protein Hfq from Granulibacter bethesdensis (strain ATCC BAA-1260 / CGDNIH1).